A 213-amino-acid polypeptide reads, in one-letter code: Ion-translocating oxidoreductase complex subunit E (213 aa).

Transmembrane regions (helical) follow at residues 25–45, 46–66, 77–97, 100–120, 135–155, and 181–201; these read TFGLVLGLCPTLAVTTSVENG, IGMAMGTLFVLVGSNMMVSAI, PVEIIVIATFVTIVDMVMEAF, DLYTSLGVFIPLIVVNCIVIG, IIDALGEGTGFLLVLILIGGI, and AMFMTMSPGAFLTIAVLMTIV.

The protein belongs to the NqrDE/RnfAE family. As to quaternary structure, the Rnf complex is probably composed of eight subunits, including RnfA, RnfB, RnfC, RnfD, RnfE and RnfG.

The protein localises to the cell membrane. In terms of biological role, part of a membrane-bound complex that couples electron transfer with translocation of ions across the membrane. Catalyzes Na(+) transport, most probably coupled to electron transfer from reduced ferredoxin to methanophenazine and heterodisulfide reductase. Involved in heterodisulfide reduction during methanogenesis from acetate. This is Ion-translocating oxidoreductase complex subunit E from Methanosarcina acetivorans (strain ATCC 35395 / DSM 2834 / JCM 12185 / C2A).